The chain runs to 396 residues: Putative F-box/kelch-repeat protein At4g11770 (396 aa).

An F-box domain is found at 9 to 55; that stretch reads PCNMPYLPDDLLLNILGRVSRLYYPILSLVSKRFRSLVGSLELYKIR. Kelch repeat units follow at residues 151-197, 198-248, and 250-296; these read YIYM…VLDG, KIYV…YEEK, and YLFG…VFYK.

The chain is Putative F-box/kelch-repeat protein At4g11770 from Arabidopsis thaliana (Mouse-ear cress).